We begin with the raw amino-acid sequence, 252 residues long: Serine/threonine phosphatase stp (252 aa).

A compositionally biased stretch (basic and acidic residues) spans M1–D18. Residues M1–F23 are disordered. The PPM-type phosphatase domain maps to H2–R242. Mn(2+) is bound by residues D36, G37, D194, and D233.

This sequence belongs to the PP2C family. Mn(2+) is required as a cofactor.

The protein localises to the cytoplasm. The protein resides in the membrane. It catalyses the reaction O-phospho-L-seryl-[protein] + H2O = L-seryl-[protein] + phosphate. It carries out the reaction O-phospho-L-threonyl-[protein] + H2O = L-threonyl-[protein] + phosphate. Its activity is regulated as follows. Activity not affected by inhibitors of phosphatases of the PPP family such as okadaic acid and cypermethrin, or by inhibitors of phosphatases of the PTP family such as sodium orthovanadate. Functionally, protein phosphatase that dephosphorylates EF-Tu. The polypeptide is Serine/threonine phosphatase stp (stp) (Listeria monocytogenes serovar 1/2a (strain ATCC BAA-679 / EGD-e)).